The primary structure comprises 523 residues: Probable methylmalonate-semialdehyde/malonate-semialdehyde dehydrogenase [acylating], mitochondrial (523 aa).

A mitochondrion-targeting transit peptide spans 1 to 22; the sequence is MLSRLARVQPKCQQLAHFSTSK. Residues Phe175, Lys199, and Glu202 each contribute to the NAD(+) site. Cys307 acts as the Nucleophile in catalysis. Glu407 contacts NAD(+).

The protein belongs to the aldehyde dehydrogenase family. Homodimer.

Its subcellular location is the mitochondrion. The catalysed reaction is 2-methyl-3-oxopropanoate + NAD(+) + CoA + H2O = propanoyl-CoA + hydrogencarbonate + NADH + H(+). The enzyme catalyses 3-oxopropanoate + NAD(+) + CoA + H2O = hydrogencarbonate + acetyl-CoA + NADH + H(+). Its function is as follows. Probable malonate and methylmalonate semialdehyde dehydrogenase involved in the catabolism of valine, thymine, and compounds catabolized by way of beta-alanine, including uracil and cytidine. The sequence is that of Probable methylmalonate-semialdehyde/malonate-semialdehyde dehydrogenase [acylating], mitochondrial (alh-8) from Caenorhabditis elegans.